Reading from the N-terminus, the 524-residue chain is Peptide chain release factor 3 (524 aa).

Residues 9-275 enclose the tr-type G domain; that stretch reads SRRRTFAIIS…AVVDLSPPPI (267 aa). Residues 18 to 25, 86 to 90, and 140 to 143 contribute to the GTP site; these read SHPDAGKT, DTPGH, and NKLD.

Belongs to the TRAFAC class translation factor GTPase superfamily. Classic translation factor GTPase family. PrfC subfamily.

It localises to the cytoplasm. Its function is as follows. Increases the formation of ribosomal termination complexes and stimulates activities of RF-1 and RF-2. It binds guanine nucleotides and has strong preference for UGA stop codons. It may interact directly with the ribosome. The stimulation of RF-1 and RF-2 is significantly reduced by GTP and GDP, but not by GMP. The chain is Peptide chain release factor 3 from Dechloromonas aromatica (strain RCB).